The following is a 284-amino-acid chain: Co-chaperone protein DjlA (284 aa).

The Periplasmic portion of the chain corresponds to methionine 1–lysine 6. The chain crosses the membrane as a helical span at residues isoleucine 7–histidine 30. Over glutamine 31–lysine 284 the chain is Cytoplasmic. The interval glutamine 190–serine 211 is disordered. Residues serine 197 to serine 211 show a composition bias toward low complexity. Residues aspartate 218 to lysine 284 form the J domain.

As to quaternary structure, homodimer.

It is found in the cell inner membrane. Regulatory DnaK co-chaperone. Direct interaction between DnaK and DjlA is needed for the induction of the wcaABCDE operon, involved in the synthesis of a colanic acid polysaccharide capsule, possibly through activation of the RcsB/RcsC phosphotransfer signaling pathway. The colanic acid capsule may help the bacterium survive conditions outside the host. This chain is Co-chaperone protein DjlA, found in Vibrio cholerae serotype O1 (strain ATCC 39315 / El Tor Inaba N16961).